Consider the following 537-residue polypeptide: Tyrosine-protein phosphatase CDC14 homolog (537 aa).

In terms of domain architecture, Tyrosine-protein phosphatase spans 182–345 (DFNWISPKFI…QVHFRAYFYE (164 aa)). Residue Cys286 is the Phosphocysteine intermediate of the active site. The disordered stretch occupies residues 359–537 (EPLATPPRHP…PKPSKSRLIS (179 aa)). Over residues 370 to 382 (NATNGTSQSNIST) the composition is skewed to polar residues. Positions 400–411 (PPSARRLPSASS) are enriched in low complexity. Residues 421–437 (ASKQSIQNENKASYSSY) are compositionally biased toward polar residues. Residue Thr453 is modified to Phosphothreonine. Ser468 and Ser470 each carry phosphoserine. The span at 490-502 (RRTSGNRWSSGSS) shows a compositional bias: low complexity. Phosphoserine is present on Ser513. Residues 514-523 (MSSLNNTSNG) are compositionally biased toward polar residues. Over residues 526–537 (AKPKPSKSRLIS) the composition is skewed to basic residues.

It belongs to the protein-tyrosine phosphatase family. Non-receptor class CDC14 subfamily. Interacts with ark1 at the kinetochores. Interacts with bir1, cdc25, mid1, nbl1, pic1, and rad24. Phosphorylated by cds1, chk1, pmk1, and cdc2 upon Hydroxylurea and H(2)O(2) stress treatment. Phosphorylation regulates the nucleolar-to-nucleoplasmic transition. Is able to autodephosphorylate.

The protein resides in the nucleus. The protein localises to the nucleolus. Its subcellular location is the cytoplasm. It localises to the cytoskeleton. It is found in the microtubule organizing center. The protein resides in the spindle pole body. The enzyme catalyses O-phospho-L-tyrosyl-[protein] + H2O = L-tyrosyl-[protein] + phosphate. Protein phosphatase which antagonizes mitotic cyclin-dependent kinase cdc2, the inactivation of which is essential for exit from mitosis. To access its substrates, is released from nucleolar sequestration during mitosis. Plays an essential in coordinating the nuclear division cycle with cytokinesis through the cytokinesis checkpoint. Involved in chromosome segregation, where it is required for meiosis I spindle dissambly as well as for establishing two consecutive chromosome segregation phases. Allows damaged actomyosin rings to be maintained to facilitate completion of cell division in response to minor perturbation of the cell division machinery. Dephosphorylates the mitotic inducer cdc25 for its rapid degradation. Down-regulation of cdc25 activity ensures a prompt inactivation of mitotic cdc2 complexes to trigger cell division. Also dephosphorylates cdc2-phosphorylated nsk1, allowing nsk1-binding to kinetochores and spindle. Dephosphorylates ase1, which is essential for spindle midzone assembly and for continuous extension of the anaphase spindle. Tethered to the contractile ring by mid1, where it dephosphorylates cdc15. This Schizosaccharomyces pombe (strain 972 / ATCC 24843) (Fission yeast) protein is Tyrosine-protein phosphatase CDC14 homolog (clp1).